Reading from the N-terminus, the 203-residue chain is MPIGTPSVPYRLPGSQYERWVDIYTRLGVERILFLGQEVNDGIANSLVAQMLYLDSDDNSKPIYLYINSPGGSVTAGLAIYDTIKYVKSDVVTICVGLAASMGAFLLAAGTKGKRVALPHSRIMIHQPLGGTSQRQASDIEIEAKEILRIKDMLNMSMADMTGQSFEKIEKDTDRDYFLSAEEAKNYGLIDRVITHPSEANQS.

Serine 101 serves as the catalytic Nucleophile. Residue histidine 126 is part of the active site.

Belongs to the peptidase S14 family. Fourteen ClpP subunits assemble into 2 heptameric rings which stack back to back to give a disk-like structure with a central cavity, resembling the structure of eukaryotic proteasomes.

It is found in the cytoplasm. The catalysed reaction is Hydrolysis of proteins to small peptides in the presence of ATP and magnesium. alpha-casein is the usual test substrate. In the absence of ATP, only oligopeptides shorter than five residues are hydrolyzed (such as succinyl-Leu-Tyr-|-NHMec, and Leu-Tyr-Leu-|-Tyr-Trp, in which cleavage of the -Tyr-|-Leu- and -Tyr-|-Trp bonds also occurs).. In terms of biological role, cleaves peptides in various proteins in a process that requires ATP hydrolysis. Has a chymotrypsin-like activity. Plays a major role in the degradation of misfolded proteins. The polypeptide is ATP-dependent Clp protease proteolytic subunit 2 (Prochlorococcus marinus (strain MIT 9312)).